Reading from the N-terminus, the 330-residue chain is Virulence plasmid integrase pGP8-D (330 aa).

One can recognise a Core-binding (CB) domain in the interval 39–124; it reads FSLFEVIMHW…SYISLTRFLN (86 aa). Residues 152 to 327 form the Tyr recombinase domain; that stretch reads VKTDAMNSLQ…SREDNASKKM (176 aa). Catalysis depends on residues arginine 189, lysine 214, histidine 279, arginine 282, and histidine 305. Tyrosine 314 acts as the O-(3'-phospho-DNA)-tyrosine intermediate in catalysis.

This sequence belongs to the 'phage' integrase family.

The sequence is that of Virulence plasmid integrase pGP8-D from Chlamydia trachomatis serovar L2 (strain ATCC VR-902B / DSM 19102 / 434/Bu).